A 365-amino-acid chain; its full sequence is Class I histocompatibility antigen, Gogo-A*0101 alpha chain (365 aa).

The N-terminal stretch at 1 to 24 (MAVMAPRTLVLLLSGALALTQTWA) is a signal peptide. An alpha-1 region spans residues 25–114 (GSHSMRYFST…LRGYYNQSED (90 aa)). Over 25-308 (GSHSMRYFST…EPSSQPTIPI (284 aa)) the chain is Extracellular. N110 is a glycosylation site (N-linked (GlcNAc...) asparagine). Residues 115–206 (GSHTIQRMYG…ENGKETLQRT (92 aa)) are alpha-2. 2 disulfide bridges follow: C125-C188 and C227-C283. Residues 207–298 (DAPKTHMTHH…GLPEPLTLRW (92 aa)) form an alpha-3 region. In terms of domain architecture, Ig-like C1-type spans 209–297 (PKTHMTHHAV…EGLPEPLTLR (89 aa)). Residues 299-308 (EPSSQPTIPI) are connecting peptide. Residues 309 to 332 (VGIIAGLVLFGAVIAGAVVAAVRW) traverse the membrane as a helical segment. Topologically, residues 333–365 (RRKSSDRKGGSYSQAASSDSAQGSDVSLTACKV) are cytoplasmic. Positions 338 to 365 (DRKGGSYSQAASSDSAQGSDVSLTACKV) are disordered. Residues 342 to 359 (GSYSQAASSDSAQGSDVS) are compositionally biased toward low complexity. S343 carries the phosphoserine modification. Residue Y344 is modified to Phosphotyrosine. A phosphoserine mark is found at S345, S349, S350, S352, S356, and S359.

Belongs to the MHC class I family. In terms of assembly, heterodimer of an alpha chain and a beta chain (beta-2-microglobulin).

It is found in the membrane. Involved in the presentation of foreign antigens to the immune system. The chain is Class I histocompatibility antigen, Gogo-A*0101 alpha chain from Gorilla gorilla gorilla (Western lowland gorilla).